A 389-amino-acid polypeptide reads, in one-letter code: Acetyl-CoA decarbonylase/synthase complex subunit delta (389 aa).

Belongs to the CdhD family. Heterodimer of delta and gamma chains. The ACDS complex is made up of alpha, epsilon, beta, gamma and delta chains with a probable stoichiometry of (alpha(2)epsilon(2))(4)-beta(8)-(gamma(1)delta(1))(8).

Part of a complex that catalyzes the reversible cleavage of acetyl-CoA, allowing autotrophic growth from CO(2). Probably maintains the overall quaternary structure of the ACDS complex. This is Acetyl-CoA decarbonylase/synthase complex subunit delta from Methanothermobacter thermautotrophicus (strain ATCC 29096 / DSM 1053 / JCM 10044 / NBRC 100330 / Delta H) (Methanobacterium thermoautotrophicum).